The following is a 406-amino-acid chain: tRNA-specific 2-thiouridylase MnmA (406 aa).

ATP is bound by residues 42–49 and Leu-68; that span reads GLSGGVDS. Residue Cys-129 is the Nucleophile of the active site. The cysteines at positions 129 and 237 are disulfide-linked. Gly-154 is a binding site for ATP. Residues 187–189 form an interaction with tRNA region; that stretch reads KDQ. The active-site Cysteine persulfide intermediate is the Cys-237. The tract at residues 342–343 is interaction with tRNA; the sequence is RY.

It belongs to the MnmA/TRMU family.

The protein resides in the cytoplasm. The enzyme catalyses S-sulfanyl-L-cysteinyl-[protein] + uridine(34) in tRNA + AH2 + ATP = 2-thiouridine(34) in tRNA + L-cysteinyl-[protein] + A + AMP + diphosphate + H(+). In terms of biological role, catalyzes the 2-thiolation of uridine at the wobble position (U34) of tRNA, leading to the formation of s(2)U34. This is tRNA-specific 2-thiouridylase MnmA from Prochlorococcus marinus (strain MIT 9211).